Consider the following 150-residue polypeptide: MSKISQQNSTPGVNGISVIHTQAHASGLQQVPQLVPAGPGGGGKAVAPSKQSKKSSPMDRNSDEYRQRRERNNMAVKKSRLKSKQKAQDTLQRVNQLKEENERLEAKIKLLTKELSVLKDLFLEHAHNLADNVQSISTENTTADGDNAGQ.

K3 is covalently cross-linked (Glycyl lysine isopeptide (Lys-Gly) (interchain with G-Cter in SUMO2)). The disordered stretch occupies residues 27-94 (GLQQVPQLVP…QKAQDTLQRV (68 aa)). Low complexity predominate over residues 28-37 (LQQVPQLVPA). A compositionally biased stretch (basic and acidic residues) spans 56–72 (SPMDRNSDEYRQRRERN). Residues 62 to 125 (SDEYRQRRER…SVLKDLFLEH (64 aa)) form the bZIP domain. A basic motif region spans residues 66-93 (RQRRERNNMAVKKSRLKSKQKAQDTLQR). A leucine-zipper region spans residues 97–118 (LKEENERLEAKIKLLTKELSVL).

It belongs to the bZIP family. C/EBP subfamily. As to quaternary structure, binds DNA as a dimer and can form stable heterodimers with CEBPA and CEBPB. Interacts with ZNF638; this interaction increases transcriptional activation.

The protein resides in the nucleus. Transcription factor that binds to the promoter and the enhancer regions of target genes. Binds to the enhancer element PRE-I (positive regulatory element-I) of the IL-4 gene. Binds to the promoter and the enhancer of the immunoglobulin heavy chain. Binds to GPE1, a cis-acting element in the G-CSF gene promoter. The polypeptide is CCAAT/enhancer-binding protein gamma (CEBPG) (Homo sapiens (Human)).